The chain runs to 237 residues: Sugar fermentation stimulation protein homolog (237 aa).

This sequence belongs to the SfsA family.

The sequence is that of Sugar fermentation stimulation protein homolog from Pseudomonas putida (strain W619).